A 283-amino-acid polypeptide reads, in one-letter code: 1D-myo-inositol 2-acetamido-2-deoxy-alpha-D-glucopyranoside deacetylase (283 aa).

Zn(2+)-binding residues include histidine 7, aspartate 10, and histidine 148.

The protein belongs to the MshB deacetylase family. The cofactor is Zn(2+).

It catalyses the reaction 1D-myo-inositol 2-acetamido-2-deoxy-alpha-D-glucopyranoside + H2O = 1D-myo-inositol 2-amino-2-deoxy-alpha-D-glucopyranoside + acetate. Functionally, catalyzes the deacetylation of 1D-myo-inositol 2-acetamido-2-deoxy-alpha-D-glucopyranoside (GlcNAc-Ins) in the mycothiol biosynthesis pathway. The sequence is that of 1D-myo-inositol 2-acetamido-2-deoxy-alpha-D-glucopyranoside deacetylase from Gordonia bronchialis (strain ATCC 25592 / DSM 43247 / BCRC 13721 / JCM 3198 / KCTC 3076 / NBRC 16047 / NCTC 10667) (Rhodococcus bronchialis).